Here is a 437-residue protein sequence, read N- to C-terminus: Adenylosuccinate synthetase (437 aa).

GTP-binding positions include 13-19 (GDEGKGK) and 41-43 (GHT). Catalysis depends on Asp-14, which acts as the Proton acceptor. Positions 14 and 41 each coordinate Mg(2+). Residues 14–17 (DEGK), 39–42 (NAGH), Thr-130, Arg-144, Gln-225, Thr-240, and Arg-310 contribute to the IMP site. His-42 functions as the Proton donor in the catalytic mechanism. Position 306–312 (306–312 (ATTGRLR)) interacts with substrate. Residues Arg-312, 338-340 (KLD), and 421-423 (STG) each bind GTP.

It belongs to the adenylosuccinate synthetase family. In terms of assembly, homodimer. Requires Mg(2+) as cofactor.

Its subcellular location is the cytoplasm. It carries out the reaction IMP + L-aspartate + GTP = N(6)-(1,2-dicarboxyethyl)-AMP + GDP + phosphate + 2 H(+). It functions in the pathway purine metabolism; AMP biosynthesis via de novo pathway; AMP from IMP: step 1/2. Plays an important role in the de novo pathway of purine nucleotide biosynthesis. Catalyzes the first committed step in the biosynthesis of AMP from IMP. The chain is Adenylosuccinate synthetase from Psychromonas ingrahamii (strain DSM 17664 / CCUG 51855 / 37).